Here is a 538-residue protein sequence, read N- to C-terminus: Phospho-2-dehydro-3-deoxyheptonate aldolase 1, chloroplastic (538 aa).

The transit peptide at Met1–Ala74 directs the protein to the chloroplast. Residues Asp55–Pro82 form a disordered region. Low complexity predominate over residues Lys68–Pro82. A Blocked amino end (Thr) modification is found at Thr75.

The protein belongs to the class-II DAHP synthase family.

The protein resides in the plastid. The protein localises to the chloroplast. It carries out the reaction D-erythrose 4-phosphate + phosphoenolpyruvate + H2O = 7-phospho-2-dehydro-3-deoxy-D-arabino-heptonate + phosphate. The protein operates within metabolic intermediate biosynthesis; chorismate biosynthesis; chorismate from D-erythrose 4-phosphate and phosphoenolpyruvate: step 1/7. With respect to regulation, activation by tryptophan (a hysteretic factor). This Solanum tuberosum (Potato) protein is Phospho-2-dehydro-3-deoxyheptonate aldolase 1, chloroplastic (SHKA).